A 333-amino-acid chain; its full sequence is Replication factor C subunit 2 (333 aa).

Position 2 is an N-acetylalanine (alanine 2). 55–62 (GPPGTGKT) is a binding site for ATP.

This sequence belongs to the activator 1 small subunits family. In terms of assembly, heterotetramer of subunits RFC2, RFC3, RFC4 and RFC5 that can form a complex with RFC1.

It is found in the nucleus. In terms of biological role, may be involved in DNA replication and thus regulate cell proliferation. This is Replication factor C subunit 2 (RFC2) from Arabidopsis thaliana (Mouse-ear cress).